Consider the following 560-residue polypeptide: Alpha-keto-acid decarboxylase (560 aa).

Residue E61 participates in thiamine diphosphate binding. Positions 396-478 (TSFYGMADHR…VVVNNDGYTV (83 aa)) are thiamine pyrophosphate binding. Positions 446, 473, and 475 each coordinate Mg(2+).

The protein belongs to the TPP enzyme family. It depends on a metal cation as a cofactor. The cofactor is thiamine diphosphate.

Decarboxylates branched-chain and aromatic alpha-keto acids to aldehydes. The polypeptide is Alpha-keto-acid decarboxylase (kdc) (Mycobacterium bovis (strain ATCC BAA-935 / AF2122/97)).